Reading from the N-terminus, the 375-residue chain is Nucleosome assembly protein 1-like 4 (375 aa).

Positions 1–28 are disordered; the sequence is MAENSLSDGGPADSVEAAKNASNTEKLT. At alanine 2 the chain carries N-acetylalanine. 3 positions are modified to phosphoserine: serine 5, serine 7, and serine 49. Threonine 51 bears the Phosphothreonine mark. 2 positions are modified to phosphoserine: serine 53 and serine 54. At threonine 58 the chain carries Phosphothreonine. The residue at position 105 (lysine 105) is an N6-acetyllysine. Serine 125 bears the Phosphoserine mark. N6-acetyllysine is present on lysine 146. The short motif at 265-271 is the Nuclear localization signal element; that stretch reads IKKKQKH. The residue at position 304 (serine 304) is a Phosphoserine. The interval 339–375 is disordered; that stretch reads AIEDDDNFEEGEEGEEEELEGDEEGEDEDDADVNPKV.

This sequence belongs to the nucleosome assembly protein (NAP) family. Interacts with core (H2A, H2B, H3, H4) and linker (H1) histones. In terms of processing, polyglutamylated and polyglycylated. These 2 modifications occur exclusively on glutamate residues and result in either polyglutamate or polyglycine chains on the gamma-carboxyl group. Both modifications can coexist on the same protein on adjacent residues, and lowering polyglycylation levels increases polyglutamylation, and reciprocally. Polyglutamylated by TTLL4. Post-translationally, phosphorylated at the G0/G1 boundary but it is not phosphorylated in S-phase. Phosphorylated protein remains in the cytoplasm in a complex with histones during the G0/G1 transition, whereas dephosphorylation triggers its transport into the nucleus at the G1/S-boundary.

The protein localises to the nucleus. It localises to the cytoplasm. Its function is as follows. Acts as a histone chaperone in nucleosome assembly. In condensing spermatids, mediates the loading of the heterodimer composed of histones H2AB1 and H2BC1/TH2B onto the nucleosomes, thereby promoting the replacement of histones to protamine in male germ cells. The protein is Nucleosome assembly protein 1-like 4 (Nap1l4) of Mus musculus (Mouse).